The chain runs to 156 residues: Small ribosomal subunit protein uS7 (156 aa).

The protein belongs to the universal ribosomal protein uS7 family. Part of the 30S ribosomal subunit. Contacts proteins S9 and S11.

One of the primary rRNA binding proteins, it binds directly to 16S rRNA where it nucleates assembly of the head domain of the 30S subunit. Is located at the subunit interface close to the decoding center, probably blocks exit of the E-site tRNA. The chain is Small ribosomal subunit protein uS7 from Paenarthrobacter aurescens (strain TC1).